The chain runs to 272 residues: Cytosolic Fe-S cluster assembly factor NUBP2 (272 aa).

Residue 23-30 (GKGGVGKS) participates in ATP binding. Residues Cys197 and Cys200 each coordinate [4Fe-4S] cluster.

Belongs to the Mrp/NBP35 ATP-binding proteins family. NUBP2/CFD1 subfamily. Heterotetramer of 2 NUBP1 and 2 NUBP2 chains. [4Fe-4S] cluster is required as a cofactor.

It is found in the cytoplasm. Its function is as follows. Component of the cytosolic iron-sulfur (Fe/S) protein assembly (CIA) machinery. Required for maturation of extramitochondrial Fe-S proteins. The NUBP1-NUBP2 heterotetramer forms a Fe-S scaffold complex, mediating the de novo assembly of an Fe-S cluster and its transfer to target apoproteins. The sequence is that of Cytosolic Fe-S cluster assembly factor NUBP2 from Gallus gallus (Chicken).